The following is a 224-amino-acid chain: Elongation factor Ts (224 aa).

The tract at residues 81–84 (TDFV) is involved in Mg(2+) ion dislocation from EF-Tu.

This sequence belongs to the EF-Ts family.

Its subcellular location is the cytoplasm. In terms of biological role, associates with the EF-Tu.GDP complex and induces the exchange of GDP to GTP. It remains bound to the aminoacyl-tRNA.EF-Tu.GTP complex up to the GTP hydrolysis stage on the ribosome. This chain is Elongation factor Ts, found in Finegoldia magna (strain ATCC 29328 / DSM 20472 / WAL 2508) (Peptostreptococcus magnus).